A 414-amino-acid chain; its full sequence is RNA exonuclease 4 (414 aa).

Positions Met1–Val174 are disordered. Basic residues predominate over residues Gln26–Ile42. Basic and acidic residues-rich tracts occupy residues Lys90 to Pro108 and Lys150 to Lys161. Residues Thr228–Tyr379 enclose the Exonuclease domain.

This sequence belongs to the REXO4 family.

Its subcellular location is the nucleus. In Xenopus tropicalis (Western clawed frog), this protein is RNA exonuclease 4 (rexo4).